A 180-amino-acid chain; its full sequence is NADH-quinone oxidoreductase subunit I (180 aa).

4Fe-4S ferredoxin-type domains are found at residues 50–80 and 90–119; these read LTRD…LQKA and EFFR…LTPD. 8 residues coordinate [4Fe-4S] cluster: cysteine 60, cysteine 63, cysteine 66, cysteine 70, cysteine 99, cysteine 102, cysteine 105, and cysteine 109.

Belongs to the complex I 23 kDa subunit family. As to quaternary structure, NDH-1 is composed of 13 different subunits. Subunits NuoA, H, J, K, L, M, N constitute the membrane sector of the complex. It depends on [4Fe-4S] cluster as a cofactor.

The protein resides in the cell inner membrane. The catalysed reaction is a quinone + NADH + 5 H(+)(in) = a quinol + NAD(+) + 4 H(+)(out). NDH-1 shuttles electrons from NADH, via FMN and iron-sulfur (Fe-S) centers, to quinones in the respiratory chain. The immediate electron acceptor for the enzyme in this species is believed to be ubiquinone. Couples the redox reaction to proton translocation (for every two electrons transferred, four hydrogen ions are translocated across the cytoplasmic membrane), and thus conserves the redox energy in a proton gradient. The polypeptide is NADH-quinone oxidoreductase subunit I (Salmonella choleraesuis (strain SC-B67)).